We begin with the raw amino-acid sequence, 1193 residues long: Stress response protein nst1 (1193 aa).

Disordered stretches follow at residues 1–197 (MVPA…SHNI), 288–368 (QGSF…TRAA), 422–468 (ESLH…EQRM), 508–815 (MEEE…MVAR), 857–942 (MPPG…TQRD), 966–988 (TLSQ…RASF), and 1145–1193 (DNNS…PMGF). A compositionally biased stretch (low complexity) spans 10–29 (SPSSTMLNSSSTTAHAAPST). A compositionally biased stretch (basic residues) spans 53 to 63 (NRKKQKRRQKQ). Residues 64–73 (AARLAERQLA) are compositionally biased toward low complexity. The segment covering 76 to 90 (HVSTDDTTQNGSSHA) has biased composition (polar residues). Over residues 91 to 128 (NPERYHSDDGGADGPDHEQPTNGDVYDKDGQDSMDAHV) the composition is skewed to basic and acidic residues. Residues 129 to 140 (DSQNPQGPNGTE) are compositionally biased toward polar residues. Over residues 146–160 (TGRKSKKKKGKKARN) the composition is skewed to basic residues. Residues 169–182 (TSTPMSTPSVSMSH) show a composition bias toward low complexity. A compositionally biased stretch (polar residues) spans 312–321 (GQHTRTQGQF). Acidic residues-rich tracts occupy residues 332–364 (TEED…EDEE) and 434–463 (DDED…DAMT). Residues 448–659 (SQEEEDYEED…EEQAKKDTAK (212 aa)) adopt a coiled-coil conformation. Basic and acidic residues-rich tracts occupy residues 508-527 (MEEE…EAQK) and 537-675 (QAKE…DQAK). Low complexity predominate over residues 722-740 (RQPSQQDSHSSSPHSQAPS). Over residues 741-769 (TDPSQASLSPRSMPVSQSSGVASGNSQQG) the composition is skewed to polar residues. The span at 914–926 (PISRPSPIKRPSS) shows a compositional bias: low complexity. Residues 933 to 942 (KGGDRTTQRD) are compositionally biased toward basic and acidic residues. The span at 972 to 986 (PGATAPGTFPGPARA) shows a compositional bias: low complexity. Over residues 1182–1193 (VLRQYSSPPMGF) the composition is skewed to polar residues.

It belongs to the NST1 family.

It localises to the cytoplasm. Functionally, may act as a negative regulator of salt tolerance. This chain is Stress response protein nst1 (nst1), found in Neosartorya fischeri (strain ATCC 1020 / DSM 3700 / CBS 544.65 / FGSC A1164 / JCM 1740 / NRRL 181 / WB 181) (Aspergillus fischerianus).